Reading from the N-terminus, the 227-residue chain is Probable methylthioribulose-1-phosphate dehydratase (227 aa).

Residue cysteine 87 participates in substrate binding. Zn(2+) is bound by residues histidine 105 and histidine 107. The active-site Proton donor/acceptor is the glutamate 129. A Zn(2+)-binding site is contributed by histidine 185.

Belongs to the aldolase class II family. MtnB subfamily. The cofactor is Zn(2+).

Its subcellular location is the cytoplasm. The enzyme catalyses 5-(methylsulfanyl)-D-ribulose 1-phosphate = 5-methylsulfanyl-2,3-dioxopentyl phosphate + H2O. It participates in amino-acid biosynthesis; L-methionine biosynthesis via salvage pathway; L-methionine from S-methyl-5-thio-alpha-D-ribose 1-phosphate: step 2/6. Functionally, catalyzes the dehydration of methylthioribulose-1-phosphate (MTRu-1-P) into 2,3-diketo-5-methylthiopentyl-1-phosphate (DK-MTP-1-P). The protein is Probable methylthioribulose-1-phosphate dehydratase of Drosophila erecta (Fruit fly).